The primary structure comprises 147 residues: MSFSAAQVDTVRSNWCSMTADIDAAGYRIFELLFQRNPDYQSKFKAFKGLAVSALKGNPNAEKHIRIVLGGLGRILGALNTPELDVIYKEMASNHKPRGVMKQQFKDMGQAIVTALSEIQSKSGGSFDRATWEALFESVANGIGQYQ.

The 146-residue stretch at 2–147 (SFSAAQVDTV…SVANGIGQYQ (146 aa)) folds into the Globin domain. The heme b site is built by histidine 64 and histidine 95.

It belongs to the globin family. Homodimer or homooligomer.

The protein is Globin of Aequiyoldia eightsii (Antarctic yoldia).